Consider the following 413-residue polypeptide: Lipoyl synthase, mitochondrial (413 aa).

The transit peptide at 1–33 directs the protein to the mitochondrion; that stretch reads MAAATNRFRALYSSSRVATPQAGSASYLSYRGY. Residues Cys133, Cys138, Cys144, Cys164, Cys168, Cys171, and Ser379 each coordinate [4Fe-4S] cluster. One can recognise a Radical SAM core domain in the interval 147–368; sequence GGDKAAATAT…RQRALDMGFL (222 aa).

Belongs to the radical SAM superfamily. Lipoyl synthase family. It depends on [4Fe-4S] cluster as a cofactor.

The protein localises to the mitochondrion. It carries out the reaction [[Fe-S] cluster scaffold protein carrying a second [4Fe-4S](2+) cluster] + N(6)-octanoyl-L-lysyl-[protein] + 2 oxidized [2Fe-2S]-[ferredoxin] + 2 S-adenosyl-L-methionine + 4 H(+) = [[Fe-S] cluster scaffold protein] + N(6)-[(R)-dihydrolipoyl]-L-lysyl-[protein] + 4 Fe(3+) + 2 hydrogen sulfide + 2 5'-deoxyadenosine + 2 L-methionine + 2 reduced [2Fe-2S]-[ferredoxin]. It functions in the pathway protein modification; protein lipoylation via endogenous pathway; protein N(6)-(lipoyl)lysine from octanoyl-[acyl-carrier-protein]: step 2/2. Its function is as follows. Catalyzes the radical-mediated insertion of two sulfur atoms into the C-6 and C-8 positions of the octanoyl moiety bound to the lipoyl domains of lipoate-dependent enzymes, thereby converting the octanoylated domains into lipoylated derivatives. This Emericella nidulans (strain FGSC A4 / ATCC 38163 / CBS 112.46 / NRRL 194 / M139) (Aspergillus nidulans) protein is Lipoyl synthase, mitochondrial.